We begin with the raw amino-acid sequence, 234 residues long: Octanoyltransferase (234 aa).

One can recognise a BPL/LPL catalytic domain in the interval 43–231; it reads IPTRNYFLFV…HFQELFQAEL (189 aa). Residues 88–95, 160–162, and 173–175 each bind substrate; these read RGGDITYH, AMG, and GFA. Cys-191 (acyl-thioester intermediate) is an active-site residue.

This sequence belongs to the LipB family.

The protein localises to the cytoplasm. It catalyses the reaction octanoyl-[ACP] + L-lysyl-[protein] = N(6)-octanoyl-L-lysyl-[protein] + holo-[ACP] + H(+). It participates in protein modification; protein lipoylation via endogenous pathway; protein N(6)-(lipoyl)lysine from octanoyl-[acyl-carrier-protein]: step 1/2. Functionally, catalyzes the transfer of endogenously produced octanoic acid from octanoyl-acyl-carrier-protein onto the lipoyl domains of lipoate-dependent enzymes. Lipoyl-ACP can also act as a substrate although octanoyl-ACP is likely to be the physiological substrate. The chain is Octanoyltransferase from Christiangramia forsetii (strain DSM 17595 / CGMCC 1.15422 / KT0803) (Gramella forsetii).